The chain runs to 281 residues: Homoserine kinase (281 aa).

Residue 83-93 coordinates ATP; the sequence is PVSSGLGSSAA.

This sequence belongs to the GHMP kinase family. Homoserine kinase subfamily.

It localises to the cytoplasm. The catalysed reaction is L-homoserine + ATP = O-phospho-L-homoserine + ADP + H(+). The protein operates within amino-acid biosynthesis; L-threonine biosynthesis; L-threonine from L-aspartate: step 4/5. Functionally, catalyzes the ATP-dependent phosphorylation of L-homoserine to L-homoserine phosphate. The polypeptide is Homoserine kinase (Thermotoga petrophila (strain ATCC BAA-488 / DSM 13995 / JCM 10881 / RKU-1)).